The sequence spans 348 residues: Ferrochelatase (348 aa).

Residues His-218 and Glu-299 each coordinate Fe cation.

It belongs to the ferrochelatase family.

It localises to the cytoplasm. It carries out the reaction heme b + 2 H(+) = protoporphyrin IX + Fe(2+). It functions in the pathway porphyrin-containing compound metabolism; protoheme biosynthesis; protoheme from protoporphyrin-IX: step 1/1. Functionally, catalyzes the ferrous insertion into protoporphyrin IX. The protein is Ferrochelatase of Methylocella silvestris (strain DSM 15510 / CIP 108128 / LMG 27833 / NCIMB 13906 / BL2).